Here is a 195-residue protein sequence, read N- to C-terminus: Recombination protein RecR (195 aa).

Residues 53-68 form a C4-type zinc finger; it reads CPVCFNIDVKSPCSIC. The region spanning 76-171 is the Toprim domain; sequence QLLCIVEELG…KVTRLACGIP (96 aa).

The protein belongs to the RecR family.

Functionally, may play a role in DNA repair. It seems to be involved in an RecBC-independent recombinational process of DNA repair. It may act with RecF and RecO. The sequence is that of Recombination protein RecR from Ehrlichia chaffeensis (strain ATCC CRL-10679 / Arkansas).